Consider the following 1679-residue polypeptide: Protein MLP2 (1679 aa).

4 coiled-coil regions span residues Ala-32 to Thr-176, Tyr-233 to Lys-466, Phe-516 to Leu-1064, and Lys-1099 to Gly-1491. 3 consecutive short sequence motifs (bipartite nuclear localization signal) follow at residues Lys-417 to Gln-433, Arg-639 to Thr-655, and Lys-1433 to Lys-1449. Disordered regions lie at residues Phe-1495–Pro-1521 and Asp-1632–Glu-1679. Composition is skewed to polar residues over residues Asn-1511 to Arg-1520 and Ile-1646 to Asp-1661. Ser-1512 bears the Phosphoserine mark. Basic and acidic residues predominate over residues Pro-1662–Pro-1671. Residue Ser-1670 is modified to Phosphoserine.

In terms of assembly, component of the nuclear complex (NPC). NPC constitutes the exclusive means of nucleocytoplasmic transport. NPCs allow the passive diffusion of ions and small molecules and the active, nuclear transport receptor-mediated bidirectional transport of macromolecules such as proteins, RNAs, ribonucleoparticles (RNPs), and ribosomal subunits across the nuclear envelope. Due to its 8-fold rotational symmetry, all subunits are present with 8 copies or multiples thereof. Interacts with NUP60 and NIC96, which tether it to the nuclear pore complex. Component of the spindle pole body core in which it interacts directly with SPC110, SPC42 and SPC29. Also interacts with YKU70 (HDF1) and MLP1.

It is found in the nucleus. Its subcellular location is the cytoplasm. The protein localises to the cytoskeleton. The protein resides in the microtubule organizing center. It localises to the spindle pole body. It is found in the nuclear pore complex. In terms of biological role, together with the closely related MLP1, involved in the structural and functional organization of perinuclear chromatin. MLP1/MLP2 associate with the nuclear pore complex and form filamentous structures along the nuclear periphery. Has a role in the localization of Esc1 to nucleolar regions. Together with MLP1, mediates tethering of the some telomeres to the nuclear periphery, probably mediated by YKU70/YKU80 (HDF1/HDF2) heterodimer and show perinuclear location dependent silencing. MLP1 and MLP2 are involved in telomere length regulation but not silencing or telomere anchoring. Plays a role in the incorporation of components into the spindle pole body. Involved in double-strand break repair, probably also mediated by the YKU70/YKU80 (HDF1/HDF2) heterodimer. The chain is Protein MLP2 (MLP2) from Saccharomyces cerevisiae (strain ATCC 204508 / S288c) (Baker's yeast).